Consider the following 830-residue polypeptide: Cyclin-dependent kinase inhibitor FAR1 (830 aa).

Residues 1 to 31 (MKTPTRVSFEKKIHTPPSGDRDAERSPPKKF) form a disordered region. The segment covering 8 to 27 (SFEKKIHTPPSGDRDAERSP) has biased composition (basic and acidic residues). The residue at position 87 (Ser-87) is a Phosphoserine; by CDC28. Phosphoserine is present on residues Ser-110 and Ser-114. Residues 202 to 252 (CLICEESISSTFTGEKVVESTCSHTSHYNCYLMLFETLYFQGKFPECKICG) form an RING-type zinc finger. Thr-306 bears the Phosphothreonine mark.

As to quaternary structure, associates with the CDC28-CLN complex. In terms of processing, thought to be phosphorylated by MAP kinase FUS3. Thought to enhance the binding of FAR1 to G1-specific cyclin-dependent kinase (CDK) complexes.

Inhibitor of the cyclin-dependent kinase CDC28. Necessary for cell cycle arrest. Involved in pheromone response. Contributes to mating efficiency. Required for oriented polarization of yeast cells in response to mating pheromones. This is Cyclin-dependent kinase inhibitor FAR1 (FAR1) from Saccharomyces cerevisiae (strain ATCC 204508 / S288c) (Baker's yeast).